The sequence spans 344 residues: Glyceraldehyde-3-phosphate dehydrogenase (344 aa).

NAD(+) contacts are provided by residues 11 to 12 (TI) and G110. 139-141 (SCN) is a D-glyceraldehyde 3-phosphate binding site. The Nucleophile role is filled by C140. R169 serves as a coordination point for NAD(+). Residue 195 to 196 (HG) participates in D-glyceraldehyde 3-phosphate binding. Q302 lines the NAD(+) pocket.

Belongs to the glyceraldehyde-3-phosphate dehydrogenase family. Homotetramer.

It is found in the cytoplasm. The catalysed reaction is D-glyceraldehyde 3-phosphate + phosphate + NADP(+) = (2R)-3-phospho-glyceroyl phosphate + NADPH + H(+). It catalyses the reaction D-glyceraldehyde 3-phosphate + phosphate + NAD(+) = (2R)-3-phospho-glyceroyl phosphate + NADH + H(+). Its pathway is carbohydrate degradation; glycolysis; pyruvate from D-glyceraldehyde 3-phosphate: step 1/5. The sequence is that of Glyceraldehyde-3-phosphate dehydrogenase from Pyrobaculum neutrophilum (strain DSM 2338 / JCM 9278 / NBRC 100436 / V24Sta) (Thermoproteus neutrophilus).